Consider the following 188-residue polypeptide: Probable DNA-directed RNA polymerase subunit delta (188 aa).

The region spanning 14–81 is the HTH HARE-type domain; it reads LSMIEVAHAL…GNNVWALRSW (68 aa). The interval 96 to 188 is disordered; the sequence is EIEDEEEEEK…EDDSDDTDED (93 aa). 2 stretches are compositionally biased toward acidic residues: residues 118–150 and 158–188; these read IEDE…EDKD and ELAE…TDED.

Belongs to the RpoE family. RNAP is composed of a core of 2 alpha, a beta and a beta' subunits. The core is associated with a delta subunit and one of several sigma factors.

Its function is as follows. Participates in both the initiation and recycling phases of transcription. In the presence of the delta subunit, RNAP displays an increased specificity of transcription, a decreased affinity for nucleic acids, and an increased efficiency of RNA synthesis because of enhanced recycling. The chain is Probable DNA-directed RNA polymerase subunit delta from Lactococcus lactis subsp. cremoris (strain MG1363).